We begin with the raw amino-acid sequence, 416 residues long: Histidine--tRNA ligase (416 aa).

The protein belongs to the class-II aminoacyl-tRNA synthetase family. Homodimer.

It localises to the cytoplasm. It catalyses the reaction tRNA(His) + L-histidine + ATP = L-histidyl-tRNA(His) + AMP + diphosphate + H(+). This chain is Histidine--tRNA ligase, found in Clostridium novyi (strain NT).